Consider the following 473-residue polypeptide: Photosystem II CP43 reaction center protein (473 aa).

Positions Met-1 to Glu-14 are excised as a propeptide. Residue Thr-15 is modified to N-acetylthreonine. At Thr-15 the chain carries Phosphothreonine. The next 5 membrane-spanning stretches (helical) occupy residues Leu-69–Ala-93, Leu-134–Asn-155, Lys-178–Thr-200, Lys-255–Ser-275, and Trp-291–Ala-312. Residue Glu-367 participates in [CaMn4O5] cluster binding. The helical transmembrane segment at Arg-447–Pro-471 threads the bilayer.

This sequence belongs to the PsbB/PsbC family. PsbC subfamily. In terms of assembly, PSII is composed of 1 copy each of membrane proteins PsbA, PsbB, PsbC, PsbD, PsbE, PsbF, PsbH, PsbI, PsbJ, PsbK, PsbL, PsbM, PsbT, PsbX, PsbY, PsbZ, Psb30/Ycf12, at least 3 peripheral proteins of the oxygen-evolving complex and a large number of cofactors. It forms dimeric complexes. The cofactor is Binds multiple chlorophylls and provides some of the ligands for the Ca-4Mn-5O cluster of the oxygen-evolving complex. It may also provide a ligand for a Cl- that is required for oxygen evolution. PSII binds additional chlorophylls, carotenoids and specific lipids..

The protein localises to the plastid. It localises to the chloroplast thylakoid membrane. Functionally, one of the components of the core complex of photosystem II (PSII). It binds chlorophyll and helps catalyze the primary light-induced photochemical processes of PSII. PSII is a light-driven water:plastoquinone oxidoreductase, using light energy to abstract electrons from H(2)O, generating O(2) and a proton gradient subsequently used for ATP formation. The protein is Photosystem II CP43 reaction center protein of Buxus microphylla (Littleleaf boxwood).